The following is a 276-amino-acid chain: Diaminopimelate epimerase (276 aa).

Substrate-binding residues include Asn-13, Gln-46, and Asn-66. Cys-75 functions as the Proton donor in the catalytic mechanism. Residues Gly-76–Asn-77, Asn-159, Asn-192, and Glu-210–Arg-211 each bind substrate. The active-site Proton acceptor is the Cys-219. Gly-220–Thr-221 lines the substrate pocket.

Belongs to the diaminopimelate epimerase family. In terms of assembly, homodimer.

The protein localises to the cytoplasm. It carries out the reaction (2S,6S)-2,6-diaminopimelate = meso-2,6-diaminopimelate. It participates in amino-acid biosynthesis; L-lysine biosynthesis via DAP pathway; DL-2,6-diaminopimelate from LL-2,6-diaminopimelate: step 1/1. Functionally, catalyzes the stereoinversion of LL-2,6-diaminopimelate (L,L-DAP) to meso-diaminopimelate (meso-DAP), a precursor of L-lysine and an essential component of the bacterial peptidoglycan. This is Diaminopimelate epimerase from Pseudomonas savastanoi pv. phaseolicola (strain 1448A / Race 6) (Pseudomonas syringae pv. phaseolicola (strain 1448A / Race 6)).